Consider the following 134-residue polypeptide: Phosphoribosyl-AMP cyclohydrolase (134 aa).

Asp77 provides a ligand contact to Mg(2+). A Zn(2+)-binding site is contributed by Cys78. Asp79 and Asp81 together coordinate Mg(2+). Zn(2+) is bound by residues Cys95 and Cys102.

It belongs to the PRA-CH family. As to quaternary structure, homodimer. Requires Mg(2+) as cofactor. The cofactor is Zn(2+).

The protein resides in the cytoplasm. The enzyme catalyses 1-(5-phospho-beta-D-ribosyl)-5'-AMP + H2O = 1-(5-phospho-beta-D-ribosyl)-5-[(5-phospho-beta-D-ribosylamino)methylideneamino]imidazole-4-carboxamide. The protein operates within amino-acid biosynthesis; L-histidine biosynthesis; L-histidine from 5-phospho-alpha-D-ribose 1-diphosphate: step 3/9. Functionally, catalyzes the hydrolysis of the adenine ring of phosphoribosyl-AMP. This is Phosphoribosyl-AMP cyclohydrolase from Pseudomonas aeruginosa (strain UCBPP-PA14).